We begin with the raw amino-acid sequence, 456 residues long: MISFSLINFSNNLSWDKVTNLIFKLQKRLFKVSYVYDRKKLYVLQKIIVQLNYSRLLAIKLVNHSVFNENLPGVDGYVSLNFYESFELNEFLKYNWNNWIFQNLKKVSLFDNDGKIIVKKVPVISDRVWCYLVKFAIEPVHEALFHPFNLGYRSQYFIYEIQELILLNLSKFSFGSKKRVLKLDLSQNFCINNYSFLMEKLIAPRCIKLGIFKLLEKGFVLEFSNNCIFNKVDFSSLLLNIFLNGIEKLHNCIRYGYFLLFFLNPIDNEKELLSKIYLFLSKLDLKFNISEIELSSIINGFDFLGWHFKFSYKSYNNLCIFPSFDNYNKFLTRIKVIINNSNYGSIIKASKIYPIVKDWKEYHKYSDLFDLNYSLCFIKKRAFKIFKSESKQDFYSSKSLLLKCFSVFNIFNKDLKNLYNKFFKPLNFRHLVFLFNRGGEGFKYFYFCIHCGVILL.

To group II intron maturases.

Its subcellular location is the plastid. Its function is as follows. Could be required for group III intron excision. The polypeptide is Maturase-like protein 1 (mat1) (Euglena longa (Euglenophycean alga)).